A 601-amino-acid polypeptide reads, in one-letter code: Sulfite reductase [NADPH] flavoprotein alpha-component (601 aa).

Positions 64–202 constitute a Flavodoxin-like domain; sequence ITLISASQTG…AAAEWRARIV (139 aa). FMN contacts are provided by residues 70–75, 117–120, and 153–162; these read SQTGNA, STQG, and LGDTSYEFFC. One can recognise an FAD-binding FR-type domain in the interval 236-450; it reads EEPLVASLSV…IEHNDNFRLP (215 aa). Residues Thr-324, Ala-358, 388 to 391, 406 to 408, and 421 to 424 each bind FAD; these read RLYS, TVG, and GGAS. Residues 521 to 522, 527 to 531, and Asp-563 each bind NADP(+); these read SR and KIYVQ. Tyr-601 contacts FAD.

This sequence belongs to the NADPH-dependent sulphite reductase flavoprotein subunit CysJ family. It in the N-terminal section; belongs to the flavodoxin family. The protein in the C-terminal section; belongs to the flavoprotein pyridine nucleotide cytochrome reductase family. Alpha(8)-beta(8). The alpha component is a flavoprotein, the beta component is a hemoprotein. FAD serves as cofactor. Requires FMN as cofactor.

The catalysed reaction is hydrogen sulfide + 3 NADP(+) + 3 H2O = sulfite + 3 NADPH + 4 H(+). The protein operates within sulfur metabolism; hydrogen sulfide biosynthesis; hydrogen sulfide from sulfite (NADPH route): step 1/1. Component of the sulfite reductase complex that catalyzes the 6-electron reduction of sulfite to sulfide. This is one of several activities required for the biosynthesis of L-cysteine from sulfate. The flavoprotein component catalyzes the electron flow from NADPH -&gt; FAD -&gt; FMN to the hemoprotein component. The sequence is that of Sulfite reductase [NADPH] flavoprotein alpha-component from Enterobacter sp. (strain 638).